The sequence spans 186 residues: uncharacterized protein (186 aa).

A run of 3 helical transmembrane segments spans residues 42–62, 80–100, and 131–151; these read ISIA…LSVL, LLFL…IGLV, and ICGI…FIVL.

To U.parvum UU008, UU041 and UU042.

Its subcellular location is the cell membrane. This is an uncharacterized protein from Ureaplasma parvum serovar 3 (strain ATCC 700970).